A 170-amino-acid polypeptide reads, in one-letter code: Peptide deformylase 1 (170 aa).

Residues Cys-92 and His-135 each contribute to the Fe cation site. The active site involves Glu-136. Fe cation is bound at residue His-139.

It belongs to the polypeptide deformylase family. The cofactor is Fe(2+).

The catalysed reaction is N-terminal N-formyl-L-methionyl-[peptide] + H2O = N-terminal L-methionyl-[peptide] + formate. Removes the formyl group from the N-terminal Met of newly synthesized proteins. Requires at least a dipeptide for an efficient rate of reaction. N-terminal L-methionine is a prerequisite for activity but the enzyme has broad specificity at other positions. This Coxiella burnetii (strain RSA 493 / Nine Mile phase I) protein is Peptide deformylase 1.